A 217-amino-acid polypeptide reads, in one-letter code: ATP phosphoribosyltransferase (217 aa).

This sequence belongs to the ATP phosphoribosyltransferase family. Short subfamily. As to quaternary structure, heteromultimer composed of HisG and HisZ subunits.

The protein localises to the cytoplasm. It carries out the reaction 1-(5-phospho-beta-D-ribosyl)-ATP + diphosphate = 5-phospho-alpha-D-ribose 1-diphosphate + ATP. It participates in amino-acid biosynthesis; L-histidine biosynthesis; L-histidine from 5-phospho-alpha-D-ribose 1-diphosphate: step 1/9. In terms of biological role, catalyzes the condensation of ATP and 5-phosphoribose 1-diphosphate to form N'-(5'-phosphoribosyl)-ATP (PR-ATP). Has a crucial role in the pathway because the rate of histidine biosynthesis seems to be controlled primarily by regulation of HisG enzymatic activity. The sequence is that of ATP phosphoribosyltransferase from Syntrophomonas wolfei subsp. wolfei (strain DSM 2245B / Goettingen).